We begin with the raw amino-acid sequence, 796 residues long: Protein translocase subunit SecA 2 (796 aa).

ATP-binding positions include Gln-84, 102–106, and Asp-496; that span reads GEGKT.

This sequence belongs to the SecA family. Monomer and homodimer (Potential). Part of the accessory SecA2/SecY2 protein translocation apparatus required to export cell wall protein SraP.

It localises to the cell membrane. The protein resides in the cytoplasm. It catalyses the reaction ATP + H2O + cellular proteinSide 1 = ADP + phosphate + cellular proteinSide 2.. In terms of biological role, part of the accessory SecA2/SecY2 system specifically required to export SraP, a serine-rich repeat cell wall protein encoded upstream in the same operon. The protein is Protein translocase subunit SecA 2 of Staphylococcus aureus (strain NCTC 8325 / PS 47).